We begin with the raw amino-acid sequence, 160 residues long: Large ribosomal subunit protein eL21B (160 aa).

K32 participates in a covalent cross-link: Glycyl lysine isopeptide (Lys-Gly) (interchain with G-Cter in ubiquitin).

Belongs to the eukaryotic ribosomal protein eL21 family. Component of the large ribosomal subunit (LSU). Mature yeast ribosomes consist of a small (40S) and a large (60S) subunit. The 40S small subunit contains 1 molecule of ribosomal RNA (18S rRNA) and 33 different proteins (encoded by 57 genes). The large 60S subunit contains 3 rRNA molecules (25S, 5.8S and 5S rRNA) and 46 different proteins (encoded by 81 genes).

The protein localises to the cytoplasm. In terms of biological role, component of the ribosome, a large ribonucleoprotein complex responsible for the synthesis of proteins in the cell. The small ribosomal subunit (SSU) binds messenger RNAs (mRNAs) and translates the encoded message by selecting cognate aminoacyl-transfer RNA (tRNA) molecules. The large subunit (LSU) contains the ribosomal catalytic site termed the peptidyl transferase center (PTC), which catalyzes the formation of peptide bonds, thereby polymerizing the amino acids delivered by tRNAs into a polypeptide chain. The nascent polypeptides leave the ribosome through a tunnel in the LSU and interact with protein factors that function in enzymatic processing, targeting, and the membrane insertion of nascent chains at the exit of the ribosomal tunnel. The sequence is that of Large ribosomal subunit protein eL21B from Saccharomyces cerevisiae (strain ATCC 204508 / S288c) (Baker's yeast).